Consider the following 159-residue polypeptide: Putative esterase DR_2406 (159 aa).

The protein belongs to the thioesterase PaaI family.

The chain is Putative esterase DR_2406 from Deinococcus radiodurans (strain ATCC 13939 / DSM 20539 / JCM 16871 / CCUG 27074 / LMG 4051 / NBRC 15346 / NCIMB 9279 / VKM B-1422 / R1).